We begin with the raw amino-acid sequence, 100 residues long: Urease subunit gamma (100 aa).

Belongs to the urease gamma subunit family. As to quaternary structure, heterotrimer of UreA (gamma), UreB (beta) and UreC (alpha) subunits. Three heterotrimers associate to form the active enzyme.

The protein localises to the cytoplasm. The enzyme catalyses urea + 2 H2O + H(+) = hydrogencarbonate + 2 NH4(+). It functions in the pathway nitrogen metabolism; urea degradation; CO(2) and NH(3) from urea (urease route): step 1/1. This chain is Urease subunit gamma, found in Picosynechococcus sp. (strain ATCC 27264 / PCC 7002 / PR-6) (Agmenellum quadruplicatum).